A 719-amino-acid chain; its full sequence is Probable 1-deoxy-D-xylulose-5-phosphate synthase, chloroplastic (719 aa).

The N-terminal 57 residues, 1–57, are a transit peptide targeting the chloroplast; the sequence is MALCAYAFPGILNRTVAVASDASKPTPLFSEWIHGTDLQFQFHQKLTQVKKRSRTVQ. Thiamine diphosphate contacts are provided by residues His145 and 186 to 188; that span reads GHS. Asp217 contacts Mg(2+). Thiamine diphosphate-binding positions include 218–219, Asn246, Tyr367, and Glu449; that span reads GA. Asn246 provides a ligand contact to Mg(2+).

Belongs to the transketolase family. DXPS subfamily. In terms of assembly, homodimer. Requires Mg(2+) as cofactor. Thiamine diphosphate is required as a cofactor.

The protein localises to the plastid. It localises to the chloroplast. It carries out the reaction D-glyceraldehyde 3-phosphate + pyruvate + H(+) = 1-deoxy-D-xylulose 5-phosphate + CO2. It functions in the pathway metabolic intermediate biosynthesis; 1-deoxy-D-xylulose 5-phosphate biosynthesis; 1-deoxy-D-xylulose 5-phosphate from D-glyceraldehyde 3-phosphate and pyruvate: step 1/1. Functionally, catalyzes the acyloin condensation reaction between C atoms 2 and 3 of pyruvate and glyceraldehyde 3-phosphate to yield 1-deoxy-D-xylulose-5-phosphate (DXP). This Capsicum annuum (Capsicum pepper) protein is Probable 1-deoxy-D-xylulose-5-phosphate synthase, chloroplastic (TKT2).